The primary structure comprises 485 residues: Portal protein (485 aa).

Positions 456–485 are disordered; sequence MVDADPTVPGSPNPTPAPKPQPAIEGGDSA. The segment covering 464–476 has biased composition (pro residues); that stretch reads PGSPNPTPAPKPQ.

This sequence belongs to the SPP1-like portal protein family. Homododecamer.

It is found in the virion. Forms the portal vertex of the capsid. This portal plays critical roles in head assembly, genome packaging, neck/tail attachment, and genome ejection. The portal protein multimerizes as a single ring-shaped homododecamer arranged around a central channel. Binds to the terminase subunits to form the packaging machine. The chain is Portal protein (14) from Mycobacterium (Mycobacteriophage D29).